The sequence spans 200 residues: dITP/XTP pyrophosphatase (200 aa).

Serine 8–lysine 13 provides a ligand contact to substrate. Glutamate 40 and aspartate 69 together coordinate Mg(2+). The Proton acceptor role is filled by aspartate 69. Residues serine 70, phenylalanine 154 to aspartate 157, lysine 177, and histidine 182 to arginine 183 each bind substrate.

This sequence belongs to the HAM1 NTPase family. In terms of assembly, homodimer. Mg(2+) serves as cofactor.

It carries out the reaction XTP + H2O = XMP + diphosphate + H(+). The enzyme catalyses dITP + H2O = dIMP + diphosphate + H(+). The catalysed reaction is ITP + H2O = IMP + diphosphate + H(+). In terms of biological role, pyrophosphatase that catalyzes the hydrolysis of nucleoside triphosphates to their monophosphate derivatives, with a high preference for the non-canonical purine nucleotides XTP (xanthosine triphosphate), dITP (deoxyinosine triphosphate) and ITP. Seems to function as a house-cleaning enzyme that removes non-canonical purine nucleotides from the nucleotide pool, thus preventing their incorporation into DNA/RNA and avoiding chromosomal lesions. The polypeptide is dITP/XTP pyrophosphatase (Coxiella burnetii (strain RSA 493 / Nine Mile phase I)).